The following is a 262-amino-acid chain: MAYRSAPLYEDVIWRTHLQPQDPTLAQAVRATIAKHREHLLEFIRLDEPAPLNAMTLAQWSSPNVLSSLLAVYSDHIYRNQPMMIRENKPLISLWAQWYIGLMVPPLMLALLTQEKALDVSPEHFHAEFHETGRVACFWVDVCEDKNATPHSPQHRMETLISQALVPVVQALEATGEINGKLIWSNTGYLINWYLTEMKQLLGEATVESLRHALFFEKTLTNGEDNPLWRTVVLRDGLLVRRTCCQRYRLPDVQQCGDCTLK.

[2Fe-2S] cluster contacts are provided by Cys244, Cys245, Cys256, and Cys259.

As to quaternary structure, monomer. Requires [2Fe-2S] cluster as cofactor.

It localises to the cytoplasm. The protein resides in the cell inner membrane. With respect to regulation, displays pH dependent redox properties. SufD is necessary for the stability of FhuF. Its function is as follows. Siderophore-iron reductase which is involved in iron removal from the hydroxamate-type siderophores coprogen, ferrichrome and ferrioxamine B after their transport into the cell. Binds both the iron-loaded and the apo forms of ferrichrome. The chain is Ferric siderophore reductase (fhuF) from Escherichia coli (strain K12).